The sequence spans 407 residues: Lysosomal phospholipase A and acyltransferase (407 aa).

The first 29 residues, 1–29 (MGCLCLYRSTLLTGGLLFLLMLADPAFPA), serve as a signal peptide directing secretion. Aspartate 41 is a substrate binding site. A disulfide bridge connects residues cysteine 60 and cysteine 84. N-linked (GlcNAc...) asparagine glycosylation is present at asparagine 94. The active-site Acyl-ester intermediate is the serine 193. Zn(2+) is bound at residue serine 193. Methionine 194 contributes to the substrate binding site. N-linked (GlcNAc...) asparagine glycosylation is present at asparagine 284. Residues aspartate 355 and histidine 387 each act as charge relay system in the active site. Histidine 387 lines the Zn(2+) pocket. The N-linked (GlcNAc...) asparagine glycan is linked to asparagine 393.

It belongs to the AB hydrolase superfamily. Lipase family. N-glycosylated. Post-translationally, N-glycosylated. N-glycosylation is important for maturation of the enzyme and normal subcellular location. Detected in brain (at protein level).

The protein localises to the lysosome. The protein resides in the secreted. It localises to the membrane. It catalyses the reaction a 1,2-diacyl-sn-glycero-3-phosphocholine + H2O = a 2-acyl-sn-glycero-3-phosphocholine + a fatty acid + H(+). The enzyme catalyses 1-hexadecanoyl-2-(9Z-octadecenoyl)-sn-glycero-3-phosphocholine + H2O = 2-(9Z-octadecenoyl)-sn-glycero-3-phosphocholine + hexadecanoate + H(+). It carries out the reaction 1,2-di-(9Z-octadecenoyl)-sn-glycero-3-phosphocholine + H2O = 2-(9Z-octadecenoyl)-sn-glycero-3-phosphocholine + (9Z)-octadecenoate + H(+). The catalysed reaction is 1-hexadecanoyl-2-glutaroyl-sn-glycero-3-phosphocholine + H2O = 2-glutaroyl-sn-glycero-3-phosphocholine + hexadecanoate + H(+). It catalyses the reaction 1-hexadecanoyl-2-nonadioyl-sn-glycero-3-phosphocholine + H2O = 2-nonadioyl-sn-glycero-3-phosphocholine + hexadecanoate + H(+). The enzyme catalyses 1-hexadecanoyl-2-(5-oxopentanoyl)-sn-glycero-3-phosphocholine + H2O = 2-(5-oxopentanoyl)-sn-glycero-3-phosphocholine + hexadecanoate + H(+). It carries out the reaction 1-hexadecanoyl-2-(9-oxononanoyl)-sn-glycero-3-phosphocholine + H2O = 2-(9-oxononanoyl)-sn-glycero-3-phosphocholine + hexadecanoate + H(+). The catalysed reaction is 1,2-dihexadecanoyl-sn-glycero-3-phosphocholine + H2O = 2-hexadecanoyl-sn-glycero-3-phosphocholine + hexadecanoate + H(+). It catalyses the reaction a 1,2-diacyl-sn-glycero-3-phosphocholine + H2O = a 1-acyl-sn-glycero-3-phosphocholine + a fatty acid + H(+). The enzyme catalyses 1-hexadecanoyl-2-(9Z-octadecenoyl)-sn-glycero-3-phosphocholine + H2O = 1-hexadecanoyl-sn-glycero-3-phosphocholine + (9Z)-octadecenoate + H(+). It carries out the reaction 1,2-di-(9Z-octadecenoyl)-sn-glycero-3-phosphocholine + H2O = 1-(9Z-octadecenoyl)-sn-glycero-3-phosphocholine + (9Z)-octadecenoate + H(+). The catalysed reaction is 1,2-dihexadecanoyl-sn-glycero-3-phosphocholine + H2O = 1-hexadecanoyl-sn-glycero-3-phosphocholine + hexadecanoate + H(+). It catalyses the reaction a 1-acyl-sn-glycero-3-phosphocholine + H2O = sn-glycerol 3-phosphocholine + a fatty acid + H(+). The enzyme catalyses 1-hexadecanoyl-sn-glycero-3-phosphocholine + H2O = sn-glycerol 3-phosphocholine + hexadecanoate + H(+). It carries out the reaction N-(acetyl)-sphing-4-enine + a 1,2-diacyl-sn-glycero-3-phosphoethanolamine = 1-O-acyl-N-(acetyl)-sphing-4-enine + a 2-acyl-sn-glycero-3-phosphoethanolamine. The catalysed reaction is 1-hexadecanoyl-2-(9Z-octadecenoyl)-sn-glycero-3-phosphoethanolamine + N-(acetyl)-sphing-4-enine = 2-(9Z-octadecenoyl)-sn-glycero-3-phosphoethanolamine + 1-hexadecanoyl-N-(acetyl)-sphing-4-enine. It catalyses the reaction 1-hexadecanoyl-2-(9Z,12Z-octadecadienoyl)-sn-glycero-3-phosphoethanolamine + N-(acetyl)-sphing-4-enine = 2-(9Z,12Z)-octadecadienoyl-sn-glycero-3-phosphoethanolamine + 1-hexadecanoyl-N-(acetyl)-sphing-4-enine. The enzyme catalyses 1-hexadecanoyl-2-(5Z,8Z,11Z,14Z-eicosatetraenoyl)-sn-glycero-3-phosphoethanolamine + N-(acetyl)-sphing-4-enine = 2-(5Z,8Z,11Z,14Z)-eicosatetraenoyl-sn-glycero-3-phosphoethanolamine + 1-hexadecanoyl-N-(acetyl)-sphing-4-enine. It carries out the reaction N-(acetyl)-sphing-4-enine + a 1,2-diacyl-sn-glycero-3-phosphoethanolamine = 1-O-acyl-N-(acetyl)-sphing-4-enine + a 1-acyl-sn-glycero-3-phosphoethanolamine. The catalysed reaction is 1-hexadecanoyl-2-(9Z-octadecenoyl)-sn-glycero-3-phosphoethanolamine + N-(acetyl)-sphing-4-enine = 1-(9Z-octadecenoyl)-N-(acetyl)-sphing-4-enine + 1-hexadecanoyl-sn-glycero-3-phosphoethanolamine. It catalyses the reaction 1-hexadecanoyl-2-(9Z,12Z-octadecadienoyl)-sn-glycero-3-phosphoethanolamine + N-(acetyl)-sphing-4-enine = 1-(9Z,12Z-octadecadienoyl)-N-acetylsphing-4-enine + 1-hexadecanoyl-sn-glycero-3-phosphoethanolamine. The enzyme catalyses 1-hexadecanoyl-2-(5Z,8Z,11Z,14Z-eicosatetraenoyl)-sn-glycero-3-phosphoethanolamine + N-(acetyl)-sphing-4-enine = 1-(5Z,8Z,11Z,14Z)-eicosatetraenoyl-N-(acetyl)-sphing-4-enine + 1-hexadecanoyl-sn-glycero-3-phosphoethanolamine. It carries out the reaction N-(acetyl)-sphing-4-enine + a 1,2-diacyl-sn-glycero-3-phosphocholine = 1-O-acyl-N-(acetyl)-sphing-4-enine + a 2-acyl-sn-glycero-3-phosphocholine. The catalysed reaction is 1-hexadecanoyl-2-(9Z-octadecenoyl)-sn-glycero-3-phosphocholine + N-(acetyl)-sphing-4-enine = 1-hexadecanoyl-N-(acetyl)-sphing-4-enine + 2-(9Z-octadecenoyl)-sn-glycero-3-phosphocholine. It catalyses the reaction 1-hexadecanoyl-2-(9Z,12Z-octadecadienoyl)-sn-glycero-3-phosphocholine + N-(acetyl)-sphing-4-enine = 2-(9Z,12Z-octadecadienoyl)-sn-glycero-3-phosphocholine + 1-hexadecanoyl-N-(acetyl)-sphing-4-enine. The enzyme catalyses 1-hexadecanoyl-2-(5Z,8Z,11Z,14Z-eicosatetraenoyl)-sn-glycero-3-phosphocholine + N-(acetyl)-sphing-4-enine = 1-hexadecanoyl-N-(acetyl)-sphing-4-enine + 2-(5Z,8Z,11Z,14Z)-eicosatetraenoyl-sn-glycero-3-phosphocholine. It carries out the reaction 1-hexadecanoyl-2-(4Z,7Z,10Z,13Z,16Z,19Z-docosahexaenoyl)-sn-glycero-3-phosphocholine + N-(acetyl)-sphing-4-enine = 2-(4Z,7Z,10Z,13Z,16Z,19Z-docosahexaenoyl)-sn-glycero-3-phosphocholine + 1-hexadecanoyl-N-(acetyl)-sphing-4-enine. The catalysed reaction is 1-hexadecanoyl-2-nonadioyl-sn-glycero-3-phosphocholine + N-(acetyl)-sphing-4-enine = 2-nonadioyl-sn-glycero-3-phosphocholine + 1-hexadecanoyl-N-(acetyl)-sphing-4-enine. It catalyses the reaction 1-octadecanoyl-2-(9Z-octadecenoyl)-sn-glycero-3-phosphocholine + N-(acetyl)-sphing-4-enine = 1-octadecanoyl-N-(acetyl)-sphing-4-enine + 2-(9Z-octadecenoyl)-sn-glycero-3-phosphocholine. The enzyme catalyses 1-(9Z)-octadecenoyl-2-octadecanoyl-sn-glycero-3-phosphocholine + N-(acetyl)-sphing-4-enine = 2-octadecanoyl-sn-glycero-3-phosphocholine + 1-(9Z-octadecenoyl)-N-(acetyl)-sphing-4-enine. It carries out the reaction 1-octadecanoyl-2-(5Z,8Z,11Z,14Z-eicosatetraenoyl)-sn-glycero-3-phosphocholine + N-(acetyl)-sphing-4-enine = 1-octadecanoyl-N-(acetyl)-sphing-4-enine + 2-(5Z,8Z,11Z,14Z)-eicosatetraenoyl-sn-glycero-3-phosphocholine. The catalysed reaction is 1-(9Z-octadecenoyl)-2-hexadecanoyl-sn-glycero-3-phosphocholine + N-(acetyl)-sphing-4-enine = 1-(9Z-octadecenoyl)-N-(acetyl)-sphing-4-enine + 2-hexadecanoyl-sn-glycero-3-phosphocholine. It catalyses the reaction N-(acetyl)-sphing-4-enine + a 1,2-diacyl-sn-glycero-3-phosphocholine = 1-O-acyl-N-(acetyl)-sphing-4-enine + a 1-acyl-sn-glycero-3-phosphocholine. The enzyme catalyses 1-hexadecanoyl-2-(9Z-octadecenoyl)-sn-glycero-3-phosphocholine + N-(acetyl)-sphing-4-enine = 1-(9Z-octadecenoyl)-N-(acetyl)-sphing-4-enine + 1-hexadecanoyl-sn-glycero-3-phosphocholine. It carries out the reaction 1-hexadecanoyl-2-(9Z,12Z-octadecadienoyl)-sn-glycero-3-phosphocholine + N-(acetyl)-sphing-4-enine = 1-(9Z,12Z-octadecadienoyl)-N-acetylsphing-4-enine + 1-hexadecanoyl-sn-glycero-3-phosphocholine. The catalysed reaction is 1-hexadecanoyl-2-(5Z,8Z,11Z,14Z-eicosatetraenoyl)-sn-glycero-3-phosphocholine + N-(acetyl)-sphing-4-enine = 1-(5Z,8Z,11Z,14Z)-eicosatetraenoyl-N-(acetyl)-sphing-4-enine + 1-hexadecanoyl-sn-glycero-3-phosphocholine. It catalyses the reaction 1-hexadecanoyl-2-(4Z,7Z,10Z,13Z,16Z,19Z-docosahexaenoyl)-sn-glycero-3-phosphocholine + N-(acetyl)-sphing-4-enine = 1-(4Z,7Z,10Z,13Z,16Z,19Z-docosahexaenoyl)-N-(acetyl)-sphing-4-enine + 1-hexadecanoyl-sn-glycero-3-phosphocholine. The enzyme catalyses 1-octadecanoyl-2-(9Z-octadecenoyl)-sn-glycero-3-phosphocholine + N-(acetyl)-sphing-4-enine = 1-(9Z-octadecenoyl)-N-(acetyl)-sphing-4-enine + 1-octadecanoyl-sn-glycero-3-phosphocholine. It carries out the reaction 1-octadecanoyl-2-(9Z,12Z)-octadecadienoyl-sn-glycero-3-phosphocholine + N-(acetyl)-sphing-4-enine = 1-(9Z,12Z-octadecadienoyl)-N-acetylsphing-4-enine + 1-octadecanoyl-sn-glycero-3-phosphocholine. The catalysed reaction is 1-(9Z-octadecenoyl)-2-hexadecanoyl-sn-glycero-3-phosphocholine + N-(acetyl)-sphing-4-enine = 1-hexadecanoyl-N-(acetyl)-sphing-4-enine + 1-(9Z-octadecenoyl)-sn-glycero-3-phosphocholine. It catalyses the reaction 1-(9Z)-octadecenoyl-2-octadecanoyl-sn-glycero-3-phosphocholine + N-(acetyl)-sphing-4-enine = 1-octadecanoyl-N-(acetyl)-sphing-4-enine + 1-(9Z-octadecenoyl)-sn-glycero-3-phosphocholine. The enzyme catalyses 1,2-di-(9Z-octadecenoyl)-sn-glycero-3-phosphocholine + N-(acetyl)-sphing-4-enine = 1-(9Z-octadecenoyl)-N-(acetyl)-sphing-4-enine + 1-(9Z-octadecenoyl)-sn-glycero-3-phosphocholine. It carries out the reaction 1-octadecanoyl-2-(5Z,8Z,11Z,14Z-eicosatetraenoyl)-sn-glycero-3-phosphocholine + N-(acetyl)-sphing-4-enine = 1-(5Z,8Z,11Z,14Z)-eicosatetraenoyl-N-(acetyl)-sphing-4-enine + 1-octadecanoyl-sn-glycero-3-phosphocholine. The catalysed reaction is a 1,2-diacyl-sn-glycero-3-phospho-L-serine + N-(acetyl)-sphing-4-enine = a 2-acyl-sn-glycero-3-phospho-L-serine + 1-O-acyl-N-(acetyl)-sphing-4-enine. It catalyses the reaction 1-octadecanoyl-2-(9Z-octadecenoyl)-sn-glycero-3-phospho-L-serine + N-(acetyl)-sphing-4-enine = 2-(9Z-octadecenoyl)-sn-glycero-3-phospho-L-serine + 1-octadecanoyl-N-(acetyl)-sphing-4-enine. The enzyme catalyses a 1,2-diacyl-sn-glycero-3-phospho-L-serine + N-(acetyl)-sphing-4-enine = 1-O-acyl-N-(acetyl)-sphing-4-enine + a 1-acyl-sn-glycero-3-phospho-L-serine. It carries out the reaction 1-octadecanoyl-2-(9Z-octadecenoyl)-sn-glycero-3-phospho-L-serine + N-(acetyl)-sphing-4-enine = 1-octadecanoyl-sn-glycero-3-phosphoserine + 1-(9Z-octadecenoyl)-N-(acetyl)-sphing-4-enine. The catalysed reaction is a 1,2-diacyl-sn-glycero-3-phospho-(1'-sn-glycerol) + N-(acetyl)-sphing-4-enine = 2-acyl-sn-glycero-3-phospho-(1'-sn-glycerol) + 1-O-acyl-N-(acetyl)-sphing-4-enine. It catalyses the reaction 1-octadecanoyl-2-(9Z-octadecenoyl)-sn-glycero-3-phospho-(1'-sn-glycerol) + N-(acetyl)-sphing-4-enine = 2-(9Z-octadecenoyl)-sn-glycero-3-phospho-(1'-sn-glycerol) + 1-octadecanoyl-N-(acetyl)-sphing-4-enine. The enzyme catalyses a 1,2-diacyl-sn-glycero-3-phospho-(1'-sn-glycerol) + N-(acetyl)-sphing-4-enine = 1-O-acyl-N-(acetyl)-sphing-4-enine + 1-acyl-sn-glycero-3-phospho-(1'-sn-glycerol). It carries out the reaction 1-octadecanoyl-2-(9Z-octadecenoyl)-sn-glycero-3-phospho-(1'-sn-glycerol) + N-(acetyl)-sphing-4-enine = 1-octadecanoyl-sn-glycero-3-phospho-(1'-sn-glycerol) + 1-(9Z-octadecenoyl)-N-(acetyl)-sphing-4-enine. The catalysed reaction is an N-acylethanolamine + a 1,2-diacyl-sn-glycero-3-phosphocholine = 2-(acylamino)ethyl fatty acid + a 2-acyl-sn-glycero-3-phosphocholine. It catalyses the reaction an N-acylethanolamine + a 1,2-diacyl-sn-glycero-3-phosphocholine = 2-(acylamino)ethyl fatty acid + a 1-acyl-sn-glycero-3-phosphocholine. The enzyme catalyses N-(5Z,8Z,11Z,14Z-eicosatetraenoyl)-ethanolamine + 1,2-di-(9Z-octadecenoyl)-sn-glycero-3-phosphocholine = 2-[(5Z,8Z,11Z,14Z)-eicosatetraenoylamino]ethyl (9Z)-octadecenoate + (9Z-octadecenoyl)-sn-glycero-3-phosphocholine. It carries out the reaction N-(9Z-octadecenoyl) ethanolamine + 1,2-di-(9Z-octadecenoyl)-sn-glycero-3-phosphocholine = 2-[(9Z)-octadecenoylamino]ethyl (9Z)-octadecenoate + (9Z-octadecenoyl)-sn-glycero-3-phosphocholine. The catalysed reaction is a 3-acyl-sn-glycerol + a 1,2-diacyl-sn-glycero-3-phosphocholine = a 1,3-diacylglycerol + a 1-acyl-sn-glycero-3-phosphocholine. It catalyses the reaction a 3-acyl-sn-glycerol + a 1,2-diacyl-sn-glycero-3-phosphocholine = a 1,3-diacylglycerol + a 2-acyl-sn-glycero-3-phosphocholine. The enzyme catalyses 3-(9Z-octadecenoyl)-sn-glycerol + 1,2-di-(9Z-octadecenoyl)-sn-glycero-3-phosphocholine = 1,3-di-(9Z-octadecenoyl)-glycerol + (9Z-octadecenoyl)-sn-glycero-3-phosphocholine. It carries out the reaction 3-hexadecanoyl-sn-glycerol + 1,2-di-(9Z-octadecenoyl)-sn-glycero-3-phosphocholine = 1-(9Z)-octadecenoyl-3-hexadecanoyl-sn-glycerol + (9Z-octadecenoyl)-sn-glycero-3-phosphocholine. The catalysed reaction is a 1-acyl-sn-glycerol + a 1,2-diacyl-sn-glycero-3-phosphocholine = a 1,3-diacylglycerol + a 2-acyl-sn-glycero-3-phosphocholine. It catalyses the reaction a 1-acyl-sn-glycerol + a 1,2-diacyl-sn-glycero-3-phosphocholine = a 1,3-diacylglycerol + a 1-acyl-sn-glycero-3-phosphocholine. The enzyme catalyses 1-(9Z-octadecenoyl)-sn-glycerol + 1,2-di-(9Z-octadecenoyl)-sn-glycero-3-phosphocholine = 1,3-di-(9Z-octadecenoyl)-glycerol + (9Z-octadecenoyl)-sn-glycero-3-phosphocholine. It carries out the reaction 1-hexadecanoyl-sn-glycerol + 1,2-di-(9Z-octadecenoyl)-sn-glycero-3-phosphocholine = 1-hexadecanoyl-3-(9Z)-octadecenoyl-sn-glycerol + (9Z-octadecenoyl)-sn-glycero-3-phosphocholine. The catalysed reaction is a 2-acylglycerol + a 1,2-diacyl-sn-glycero-3-phosphocholine = a 1,2-diacylglycerol + a 2-acyl-sn-glycero-3-phosphocholine. It catalyses the reaction a 2-acylglycerol + a 1,2-diacyl-sn-glycero-3-phosphocholine = a 1,2-diacylglycerol + a 1-acyl-sn-glycero-3-phosphocholine. The enzyme catalyses 2-hexadecanoylglycerol + 1,2-di-(9Z-octadecenoyl)-sn-glycero-3-phosphocholine = 1-(9Z)-octadecenoyl-2-hexadecanoylglycerol + (9Z-octadecenoyl)-sn-glycero-3-phosphocholine. It carries out the reaction 1-O-alkylglycerol + a 1,2-diacyl-sn-glycero-3-phosphocholine = 1-O-alkyl-3-acylglycerol + a 1-acyl-sn-glycero-3-phosphocholine. The catalysed reaction is 1-O-alkylglycerol + a 1,2-diacyl-sn-glycero-3-phosphocholine = 1-O-alkyl-3-acylglycerol + a 2-acyl-sn-glycero-3-phosphocholine. It catalyses the reaction 1-O-hexadecylglycerol + 1,2-di-(9Z-octadecenoyl)-sn-glycero-3-phosphocholine = 1-O-hexadecyl-3-(9Z)-octadecenoylglycerol + (9Z-octadecenoyl)-sn-glycero-3-phosphocholine. The enzyme catalyses 1-O-alkyl-2-acyl-sn-glycerol + a 1,2-diacyl-sn-glycero-3-phosphocholine = 1-O-alkyl-2,3-diacyl-sn-glycerol + a 2-acyl-sn-glycero-3-phosphocholine. It carries out the reaction 1-O-alkyl-2-acyl-sn-glycerol + a 1,2-diacyl-sn-glycero-3-phosphocholine = 1-O-alkyl-2,3-diacyl-sn-glycerol + a 1-acyl-sn-glycero-3-phosphocholine. The catalysed reaction is 1-O-hexadecyl-2-acetyl-sn-glycerol + 1,2-di-(9Z-octadecenoyl)-sn-glycero-3-phosphocholine = 1-O-hexadecyl-2-acetyl-3-(9Z)-octadecenoyl-sn-glycerol + (9Z-octadecenoyl)-sn-glycero-3-phosphocholine. It catalyses the reaction 1-O-hexadecyl-2-O-methyl-sn-glycerol + 1,2-di-(9Z-octadecenoyl)-sn-glycero-3-phosphocholine = 1-O-hexadecyl-2-O-methyl-3-(9Z)-octadecenoyl-sn-glycerol + (9Z-octadecenoyl)-sn-glycero-3-phosphocholine. The enzyme catalyses a 1,2-diacyl-sn-glycero-3-phosphoethanolamine + H2O = a 1-acyl-sn-glycero-3-phosphoethanolamine + a fatty acid + H(+). It carries out the reaction 1-acyl-2-(5Z,8Z,11Z,14Z)-eicosatetraenoyl-sn-glycero-3-phosphoethanolamine + H2O = a 1-acyl-sn-glycero-3-phosphoethanolamine + (5Z,8Z,11Z,14Z)-eicosatetraenoate + H(+). The catalysed reaction is a 1,2-diacyl-sn-glycero-3-phospho-(1'-sn-glycerol) + H2O = 1-acyl-sn-glycero-3-phospho-(1'-sn-glycerol) + a fatty acid + H(+). It catalyses the reaction 1-hexadecanoyl-2-(9Z-octadecenoyl)-sn-glycero-3-phospho-(1'-sn-glycerol) + H2O = 1-hexadecanoyl-sn-glycero-3-phospho-(1'-sn-glycerol) + (9Z)-octadecenoate + H(+). The enzyme catalyses a 1,2-diacyl-sn-glycero-3-phospho-(1'-sn-glycerol) + H2O = 2-acyl-sn-glycero-3-phospho-(1'-sn-glycerol) + a fatty acid + H(+). It carries out the reaction 1-hexadecanoyl-2-(9Z-octadecenoyl)-sn-glycero-3-phospho-(1'-sn-glycerol) + H2O = 2-(9Z-octadecenoyl)-sn-glycero-3-phospho-(1'-sn-glycerol) + hexadecanoate + H(+). With respect to regulation, transacylase activity is completely inhibited by Triton X-100 and partially inhibited by heparin. Moderately activated by Mg(2+) and Ca(2+). In terms of biological role, has dual calcium-independent phospholipase and O-acyltransferase activities with a potential role in glycerophospholipid homeostasis and remodeling of acyl groups of lipophilic alcohols present in acidic cellular compartments. Catalyzes hydrolysis of the ester bond of the fatty acyl group attached at sn-1 or sn-2 position of phospholipids (phospholipase A1 or A2 activity) and transfer it to the hydroxyl group at the first carbon of lipophilic alcohols (O-acyltransferase activity). Among preferred fatty acyl donors are phosphatidylcholines, phosphatidylethanolamines, phosphatidylglycerols and phosphatidylserines. Favors sn-2 over sn-1 deacylation of unsaturated fatty acyl groups of phosphatidylcholines, phosphatidylethanolamines, and phosphatidylglycerols. Among preferred fatty acyl acceptors are natural lipophilic alcohols including short-chain ceramide N-acetyl-sphingosine (C2 ceramide), alkylacylglycerols, monoacylglycerols, and acylethanolamides such as anandamide and oleoylethanolamide. Selectively hydrolyzes the sn-1 fatty acyl group of truncated oxidized phospholipids and may play a role in detoxification of reactive oxidized phospholipids during oxidative stress. Required for normal phospholipid degradation in alveolar macrophages with potential implications in the clearance of pulmonary surfactant, which is mainly composed of dipalmitoylphosphatidylcholine (1,2-dihexadecanoyl-sn-glycero-3-phosphocholine). Involved in the first step of bis(monoacylglycero)phosphate (BMP) de novo synthesis from phosphatidylglycerol (1,2-diacyl-sn-glycero-3-phospho-(1'-sn-glycerol), PG). BMP is an important player in cargo sorting and degradation, regulation of cellular cholesterol levels and intercellular communication. At neutral pH, hydrolyzes the sn-1 fatty acyl group of the lysophosphatidylcholines. In Bos taurus (Bovine), this protein is Lysosomal phospholipase A and acyltransferase (PLA2G15).